The chain runs to 678 residues: Proprotein convertase subtilisin/kexin type 4 (678 aa).

The signal sequence occupies residues 1–26; the sequence is MRPSQTALWLGLVLSLALLAVGWASA. Positions 27 to 110 are excised as a propeptide; sequence RPPIYVSSWA…QQTLRRRVKR (84 aa). A Peptidase S8 domain is found at 123–437; sequence QWYMNKEIEQ…YGLLDAGLLV (315 aa). Active-site charge relay system residues include aspartate 155, histidine 196, and serine 370. A P/Homo B domain is found at 446 to 580; it reads TKPQKKCTIR…TLLLYGTAED (135 aa). Residue asparagine 472 is glycosylated (N-linked (GlcNAc...) asparagine).

Belongs to the peptidase S8 family. Furin subfamily. In terms of assembly, the proPCSK4 form interacts with HSPA5; the interaction takes place at the endoplasmic reticulum. In terms of processing, N-glycosylated. Synthesized in the endoplasmic reticulum as a zymogen, is matured by autocatalytic cleavage between the prodomain and the catalytic domain. Expressed abundantly in the testis. High levels seen in germ cells but not in Leydig, Sertoli or peritubular cells. Expressed in the pachytene spermatocytes and the round spermatids but not in the elongating spermatids. May be expressed within hormonally stimulated ovaries.

It is found in the cytoplasmic vesicle. The protein resides in the secretory vesicle. Its subcellular location is the acrosome membrane. In terms of biological role, proprotein convertase involved in the processing of hormone and other protein precursors at sites comprised of pairs of basic amino acid residues. In males, important for ADAM2 processing as well as other acrosomal proteins with roles in fertilization and critical for normal fertilization events such as sperm capacitation, acrosome reaction and binding of sperm to zona pellucida. Plays also a role in female fertility, involved in the regulation of trophoblast migration and placental development, may be through the proteolytical processing and activation of proteins such as IGF2. May also participate in folliculogenesis in the ovaries. In Rattus norvegicus (Rat), this protein is Proprotein convertase subtilisin/kexin type 4 (Pcsk4).